The following is a 68-amino-acid chain: Antimicrobial peptide Eval655 (68 aa).

A signal peptide spans 1–23 (MKTQFVVLLVALVLLQMFAQSEA). L36 is subject to Leucine amide. A propeptide spanning residues 37-68 (GKRGLKNLDDFDDIFDDDLSSADLEFLKQLMR) is cleaved from the precursor.

Belongs to the non-disulfide-bridged peptide (NDBP) superfamily. Short antimicrobial peptide (group 4) family. In terms of tissue distribution, expressed by the venom gland.

It localises to the secreted. Probable antimicrobial peptide. Shows low inhibitory activity against herpes simplex virus type 1 (HSV-1). The sequence is that of Antimicrobial peptide Eval655 from Euscorpiops validus (Scorpion).